The primary structure comprises 700 residues: Calpain-2 catalytic subunit (700 aa).

Position 2 is an N-acetylalanine (Ala2). A propeptide spans 2 to 19 (anchors to the small subunit); the sequence is AGIAAKLAKDREAAEGLG. The 300-residue stretch at 45–344 folds into the Calpain catalytic domain; that stretch reads LFQDPSFPAI…YSRLEICNLT (300 aa). Residues Ile89, Gly91, and Asp96 each contribute to the Ca(2+) site. The active site involves Cys105. Residues Glu175, Gln229, and Lys230 each contribute to the Ca(2+) site. Residues His262 and Asn286 contribute to the active site. Ca(2+) contacts are provided by Glu292, Asp299, and Glu323. The interval 345-514 is domain III; that stretch reads PDTLTSDTYK…KKADYQAVDD (170 aa). The tract at residues 515–529 is linker; the sequence is EIEANLEEFDISEDD. A domain IV region spans residues 530 to 700; sequence IDDGFRRLFA…LISWLCFSVL (171 aa). Ala542, Asp545, Glu547, Glu552, Asp585, Asp587, Ser589, Lys591, Glu596, Asp615, Asp617, Ser619, Thr621, Glu626, Asp658, and Asn661 together coordinate Ca(2+). EF-hand domains lie at 572–605 and 602–637; these read FSIE…TKIQ and TKIQ…AGFK. The EF-hand 3 domain occupies 667–700; that stretch reads VRLETLFKIFKQLDPENTGTIELDLISWLCFSVL.

It belongs to the peptidase C2 family. Forms a heterodimer with a small (regulatory) subunit (CAPNS1). Interacts with CPEB3; this leads to cleavage of CPEB3. Interacts with PIDD1 alternative open reading frame protein altPIDD1. Requires Ca(2+) as cofactor. Ubiquitous.

Its subcellular location is the cytoplasm. It localises to the cell membrane. It carries out the reaction Broad endopeptidase specificity.. Activated by 200-1000 micromolar concentrations of calcium and inhibited by calpastatin. Functionally, calcium-regulated non-lysosomal thiol-protease which catalyzes limited proteolysis of substrates involved in cytoskeletal remodeling and signal transduction. Proteolytically cleaves MYOC at 'Arg-226'. Proteolytically cleaves CPEB3 following neuronal stimulation which abolishes CPEB3 translational repressor activity, leading to translation of CPEB3 target mRNAs. The chain is Calpain-2 catalytic subunit (CAPN2) from Homo sapiens (Human).